A 272-amino-acid chain; its full sequence is Dermonecrotic toxin LvSicTox-alphaIC1biv (272 aa).

Residue His5 is part of the active site. Mg(2+)-binding residues include Glu25 and Asp27. Catalysis depends on His41, which acts as the Nucleophile. Disulfide bonds link Cys45-Cys51 and Cys47-Cys189. Asp84 contacts Mg(2+).

It belongs to the arthropod phospholipase D family. Class II subfamily. Mg(2+) is required as a cofactor. In terms of tissue distribution, expressed by the venom gland.

The protein resides in the secreted. It carries out the reaction an N-(acyl)-sphingosylphosphocholine = an N-(acyl)-sphingosyl-1,3-cyclic phosphate + choline. The catalysed reaction is an N-(acyl)-sphingosylphosphoethanolamine = an N-(acyl)-sphingosyl-1,3-cyclic phosphate + ethanolamine. The enzyme catalyses a 1-acyl-sn-glycero-3-phosphocholine = a 1-acyl-sn-glycero-2,3-cyclic phosphate + choline. It catalyses the reaction a 1-acyl-sn-glycero-3-phosphoethanolamine = a 1-acyl-sn-glycero-2,3-cyclic phosphate + ethanolamine. In terms of biological role, dermonecrotic toxins cleave the phosphodiester linkage between the phosphate and headgroup of certain phospholipids (sphingolipid and lysolipid substrates), forming an alcohol (often choline) and a cyclic phosphate. This toxin acts on sphingomyelin (SM). It may also act on ceramide phosphoethanolamine (CPE), lysophosphatidylcholine (LPC) and lysophosphatidylethanolamine (LPE), but not on lysophosphatidylserine (LPS), and lysophosphatidylglycerol (LPG). It acts by transphosphatidylation, releasing exclusively cyclic phosphate products as second products. Induces dermonecrosis, hemolysis, increased vascular permeability, edema, inflammatory response, and platelet aggregation. The sequence is that of Dermonecrotic toxin LvSicTox-alphaIC1biv from Loxosceles variegata (Recluse spider).